Reading from the N-terminus, the 795-residue chain is Antibiotic resistant DNA gyrase subunit B (795 aa).

The region spanning 421–536 (SELYLVEGNS…RGYIYIAQPP (116 aa)) is the Toprim domain. Glu427, Asp501, and Asp503 together coordinate Mg(2+).

Belongs to the type II topoisomerase GyrB family. In terms of assembly, heterotetramer, composed of two GyrA and two GyrB chains. In the heterotetramer, GyrA contains the active site tyrosine that forms a transient covalent intermediate with DNA, while GyrB binds cofactors and catalyzes ATP hydrolysis. The cofactor is Mg(2+). It depends on Mn(2+) as a cofactor. Requires Ca(2+) as cofactor.

The protein resides in the cytoplasm. It catalyses the reaction ATP-dependent breakage, passage and rejoining of double-stranded DNA.. A type II topoisomerase that negatively supercoils closed circular double-stranded (ds) DNA in an ATP-dependent manner to modulate DNA topology and maintain chromosomes in an underwound state. Negative supercoiling favors strand separation, and DNA replication, transcription, recombination and repair, all of which involve strand separation. Also able to catalyze the interconversion of other topological isomers of dsDNA rings, including catenanes and knotted rings. Type II topoisomerases break and join 2 DNA strands simultaneously in an ATP-dependent manner. This is Antibiotic resistant DNA gyrase subunit B from Neisseria gonorrhoeae.